Reading from the N-terminus, the 285-residue chain is Diphthine methyl ester synthase (285 aa).

S-adenosyl-L-methionine-binding positions include L9, D84, G87, 112 to 113 (SI), and L163. At S171 the chain carries Phosphoserine. 2 residues coordinate S-adenosyl-L-methionine: V225 and H250.

It belongs to the diphthine synthase family.

It catalyses the reaction 2-[(3S)-amino-3-carboxypropyl]-L-histidyl-[translation elongation factor 2] + 4 S-adenosyl-L-methionine = diphthine methyl ester-[translation elongation factor 2] + 4 S-adenosyl-L-homocysteine + 3 H(+). The protein operates within protein modification; peptidyl-diphthamide biosynthesis. Its function is as follows. S-adenosyl-L-methionine-dependent methyltransferase that catalyzes four methylations of the modified target histidine residue in translation elongation factor 2 (EF-2), to form an intermediate called diphthine methyl ester. The four successive methylation reactions represent the second step of diphthamide biosynthesis. The chain is Diphthine methyl ester synthase (DPH5) from Homo sapiens (Human).